We begin with the raw amino-acid sequence, 224 residues long: Cytidylate kinase (224 aa).

Residue 11–19 (GPAAAGKST) participates in ATP binding.

The protein belongs to the cytidylate kinase family. Type 1 subfamily.

The protein resides in the cytoplasm. The catalysed reaction is CMP + ATP = CDP + ADP. The enzyme catalyses dCMP + ATP = dCDP + ADP. This chain is Cytidylate kinase, found in Listeria monocytogenes serotype 4b (strain CLIP80459).